Here is a 589-residue protein sequence, read N- to C-terminus: BTB/POZ domain and ankyrin repeat-containing protein NPR3 (589 aa).

Residues 1-25 (METSTISFSSSSPPSPPPPQPAPGD) are disordered. A compositionally biased stretch (pro residues) spans 13–22 (PPSPPPPQPA). Positions 52–137 (AEIVLASGGG…LYTGRLRSAP (86 aa)) constitute a BTB domain. Residues 140–154 (AAACLDDGCSHDACR) form a C2HC NPR-type zinc finger. Cysteine 143, cysteine 148, histidine 150, and cysteine 153 together coordinate Zn(2+). 3 ANK repeats span residues 260 to 290 (KRVR…TLDD), 292 to 319 (FAIH…NVNL), and 323 to 352 (SGYT…SVLE). A salicylic acid-binding core (SBC) region spans residues 382 to 521 (ERSKAYLCIG…LDKFLNEEST (140 aa)). Residue arginine 433 participates in salicylate binding. Positions 555-589 (DKAAGAAISSSTSASSSPRYETKLRPGNKKGKLSR) are disordered. The span at 558 to 571 (AGAAISSSTSASSS) shows a compositional bias: low complexity. The segment covering 580 to 589 (PGNKKGKLSR) has biased composition (basic residues).

Belongs to the plant 'ANKYRIN-BTB/POZ' family. 'NPR1-like' subfamily. As to quaternary structure, interacts with TGA2.1, TGA2.2, TGA2.3, LG2, TGAL1, TGAL4, NRR, RH1, RH2 and RH3.

Its subcellular location is the nucleus. Its pathway is protein modification; protein ubiquitination. Salicylic acid (SA)-binding substrate-specific adapter of an E3 ubiquitin-protein ligase complex (CUL3-RBX1-BTB) which mediates the ubiquitination and subsequent proteasomal degradation of target proteins. Involved in defense response against the bacterial blight disease caused by Xanthomonas oryzae pv. oryzae (Xoo). Plants expressing an NPR3/NH3 transgene driven by its native promoter show enhanced resistance to the Xoo pathogen, and exhibit elevated sensitivity to benzothiadiazole (BTH) treatment and enhanced induction of defense-related genes upon treatment with BTH. Intriguingly, constitutive over-expression of NPR3/NH3 with a ubiquitin promoter does not confer disease resistance to Xoo. This Oryza sativa subsp. japonica (Rice) protein is BTB/POZ domain and ankyrin repeat-containing protein NPR3.